Here is a 977-residue protein sequence, read N- to C-terminus: Probable UDP-N-acetylglucosamine--peptide N-acetylglucosaminyltransferase SEC (977 aa).

14 TPR repeats span residues 2–35, 53–86, 87–120, 121–154, 155–188, 189–222, 223–256, 257–290, 291–324, 325–358, 359–392, 393–426, 427–460, and 461–494; these read ISSKNGAAMISRPVFLSDRVDEVFSRKLDLSVSS, DDARLALAHQLYKGGDFKQALEHSNMVYQRNPLR, TDNLLLIGAIYYQLQEYDMCIARNEEALRIQPQF, AECYGNMANAWKEKGDTDRAIRYYLIAIELRPNF, ADAWSNLASAYMRKGRLSEATQCCQQALSLNPLL, VDAHSNLGNLMKAQGLIHEAYSCYLEAVRIQPTF, AIAWSNLAGLFMESGDLNRALQYYKEAVKLKPAF, PDAYLNLGNVYKALGRPTEAIMCYQHALQMRPNS, AMAFGNIASIYYEQGQLDLAIRHYKQALSRDPRF, LEAYNNLGNALKDIGRVDEAVRCYNQCLALQPNH, PQAMANLGNIYMEWNMMGPASSLFKATLAVTTGL, SAPFNNLAIIYKQQGNYSDAISCYNEVLRIDPLA, ADALVNRGNTYKEIGRVTEAIQDYMHAINFRPTM, and AEAHANLASAYKDSGHVEAAITSYKQALLLRPDF. Residues 495–977 are catalytic region; the sequence is PEATCNLLHT…ENDLEFPHDR (483 aa).

It belongs to the glycosyltransferase 41 family. O-GlcNAc transferase subfamily. In terms of assembly, interacts with TCP14 and TCP15. Interacts with ATX1.

The catalysed reaction is L-seryl-[protein] + UDP-N-acetyl-alpha-D-glucosamine = 3-O-(N-acetyl-beta-D-glucosaminyl)-L-seryl-[protein] + UDP + H(+). The enzyme catalyses L-threonyl-[protein] + UDP-N-acetyl-alpha-D-glucosamine = 3-O-(N-acetyl-beta-D-glucosaminyl)-L-threonyl-[protein] + UDP + H(+). It participates in protein modification; protein glycosylation. Functionally, O-linked N-acetylglucosamine transferase (OGT) that mediates O-glycosylation of capsid protein (CP) of virus in case of infection by Plum pox virus. OGTs catalyze the addition of nucleotide-activated sugars directly onto the polypeptide through O-glycosidic linkage with the hydroxyl of serine or threonine. Probably acts by adding O-linked sugars to yet unknown proteins. Its OGT activity has been proved in vitro but not in vivo. Required with SPY for gamete and seed development. Mediates O-glycosylation of the DELLA protein RGA, a repressor of the gibberellin (GA) signaling pathway. O-glycosylation by SEC inhibits RGA binding to four of its interactors PIF3, PIF4, JAZ1, and BZR1 that are key regulators in light, jasmonate, and brassinosteroid signaling pathways, respectively. Activates ATX1 through O-GlcNAc modification to augment ATX1-mediated H3K4me3 histone epigenetic modification at FLC locus, thus preventing premature flowering. In Arabidopsis thaliana (Mouse-ear cress), this protein is Probable UDP-N-acetylglucosamine--peptide N-acetylglucosaminyltransferase SEC.